Here is a 92-residue protein sequence, read N- to C-terminus: Putative lambdoid prophage defective integrase (92 aa).

It belongs to the 'phage' integrase family.

This is Putative lambdoid prophage defective integrase (intG) from Escherichia coli O157:H7.